Here is a 644-residue protein sequence, read N- to C-terminus: Zinc transporter ZIP4 (644 aa).

Positions 1-27 (MAILAWLEPRPLLAVLVLVLTMRMAQP) are cleaved as a signal peptide. Residues 28–323 (AHLLTLLSSG…QNQLSQAEKY (296 aa)) lie on the Extracellular side of the membrane. 3 disulfide bridges follow: Cys59–Cys64, Cys67–Cys103, and Cys153–Cys188. Residues 231–259 (TETHSDHHHQEKRVNRQGPTPLTAPNSSS) are disordered. Basic and acidic residues predominate over residues 233–244 (THSDHHHQEKRV). Positions 247 to 259 (QGPTPLTAPNSSS) are enriched in polar residues. Cysteines 266 and 305 form a disulfide. A helical membrane pass occupies residues 324 to 344 (LYGSLATLLICLCSTFGLLLL). Over 345-355 (TCAACSTAAHY) the chain is Cytoplasmic. A helical transmembrane segment spans residues 356–376 (VIQTFLGMAVGALTGDALLHL). The Extracellular segment spans residues 377 to 404 (TPKVLGLHQHGGDSEHRADSHGPQTTWR). A helical membrane pass occupies residues 405-425 (LVVALSGLYVFFLFEKLCDLL). Residues 426-495 (LPQDPEDRKG…KSPELRLLPY (70 aa)) are Cytoplasmic-facing. The Essential for SLC39A4 endocytosis motif lies at 449–451 (LQL). The segment covering 456-467 (LRPPKQPHEGSR) has biased composition (basic and acidic residues). Residues 456 to 484 (LRPPKQPHEGSRADLVAEESPELLSPEPR) form a disordered region. A helical membrane pass occupies residues 496-515 (MITLGDGLHNFADGLAVGAA). His504, Asn505, and Asp508 together coordinate Zn(2+). Residues 516–523 (FASSWKTG) lie on the Extracellular side of the membrane. Residues 524-550 (LATSLAVFCHEVPHELGDFAALLHAGL) traverse the membrane as a helical segment. His533, Glu534, and His537 together coordinate Zn(2+). The Cytoplasmic portion of the chain corresponds to 551 to 555 (PVSRA). A helical membrane pass occupies residues 556-576 (LLLNLASGLTAFAGLYVALAL). Over 577 to 583 (GVGEESE) the chain is Extracellular. A helical transmembrane segment spans residues 584–604 (SWTLAVAIGLFLYVALCDMLP). The Cytoplasmic segment spans residues 605–614 (AMLNVRDPRP). The helical transmembrane segment at 615-635 (WLLFLLHNVGLLGGWAVLLLL) threads the bilayer. At 636–644 (SLYEDSIAL) the chain is on the extracellular side.

Belongs to the ZIP transporter (TC 2.A.5) family. As to quaternary structure, homodimer. In terms of processing, the extracellular N-terminal ectodomain is cleaved when cells are Zn(2+) deficient, N-terminally cleaved SLC39A4 is internalized at a faster rate. Post-translationally, under excess Zn(2+) conditions, SLC39A4 on the cell surface is rapidly endocytosed, ubiquitinated and degraded. Glycosylated.

Its subcellular location is the cell membrane. The protein resides in the recycling endosome membrane. The protein localises to the apical cell membrane. It catalyses the reaction Zn(2+)(in) = Zn(2+)(out). In terms of biological role, selective transporter that mediates the uptake of Zn(2+). Plays an essential role for dietary zinc uptake from small intestine. The Zn(2+) uniporter activity is regulated by zinc availability. Also exhibits polyspecific binding and transport of Cu(2+), Cd(2+) and possibly Ni(2+) but at higher concentrations. The chain is Zinc transporter ZIP4 from Pteropus alecto (Black flying fox).